A 552-amino-acid polypeptide reads, in one-letter code: Steroid transmembrane transporter SLC22A24 (552 aa).

The next 12 helical transmembrane spans lie at 16 to 36 (FQILQIAFFFVTSMITYTHIL), 144 to 164 (LKSVVQTLFMSGSLLGGLMFG), 175 to 197 (IYTWCLLQTAIADTCAIFAPTFV), 201 to 220 (IFRFLAGLTTINIMTNAFIL), 232 to 252 (IGITLILCSYSIGQMLLGGLA), 255 to 275 (IRDWYTLHLTVSIPLFVLSLL), 349 to 369 (IICFLSFIRLGASVPFMGLIL), 371 to 391 (LQDLGSSIFLFQVLFGAITFI), 407 to 427 (INQSLFFFLVGLCILVNTFLS), 435 to 455 (VVLATLGIGTVSAANATFFVH), 474 to 494 (VFSRMGSVLAPLLMTLVVYSP), and 496 to 516 (LPWVMYGVFPILAGLIVFCLP).

It belongs to the major facilitator (TC 2.A.1) superfamily. Organic cation transporter (TC 2.A.1.19) family.

It is found in the cell membrane. The enzyme catalyses estrone 3-sulfate(out) + glutarate(in) = estrone 3-sulfate(in) + glutarate(out). The catalysed reaction is 17beta-estradiol 17-O-(beta-D-glucuronate)(out) + glutarate(in) = 17beta-estradiol 17-O-(beta-D-glucuronate)(in) + glutarate(out). It catalyses the reaction taurocholate(out) + glutarate(in) = taurocholate(in) + glutarate(out). It carries out the reaction 5alpha-androstane-3alpha,17beta-diol 3-O-(beta-D-glucuronate)(out) + glutarate(in) = 5alpha-androstane-3alpha,17beta-diol 3-O-(beta-D-glucuronate)(in) + glutarate(out). The enzyme catalyses glycocholate(out) + glutarate(in) = glycocholate(in) + glutarate(out). The catalysed reaction is dehydroepiandrosterone 3-sulfate(out) + glutarate(in) = dehydroepiandrosterone 3-sulfate(in) + glutarate(out). It catalyses the reaction glutarate(in) + succinate(out) = glutarate(out) + succinate(in). Renal transmembrane organic anion/dicarboxylate exchanger that participates in the reabsorption of conjugated steroids, as well as bile acids, driven by an outward gradient of dicarboxylates such as glutarate or succinate. Transports androstanediol glucuronide (5alpha-androstane-3alpha,17beta-diol 3-O-(beta-D-glucuronate)), estrone 3-sulfate, and estradiol-17-glucuronide (17beta-estradiol 17-O-(beta-D-glucuronate)), and taurocholate. In Oryctolagus cuniculus (Rabbit), this protein is Steroid transmembrane transporter SLC22A24.